Reading from the N-terminus, the 504-residue chain is ATP synthase subunit alpha, chloroplastic (504 aa).

169 to 176 is a binding site for ATP; the sequence is GDRQTGKT.

It belongs to the ATPase alpha/beta chains family. As to quaternary structure, F-type ATPases have 2 components, CF(1) - the catalytic core - and CF(0) - the membrane proton channel. CF(1) has five subunits: alpha(3), beta(3), gamma(1), delta(1), epsilon(1). CF(0) has four main subunits: a, b, b' and c.

Its subcellular location is the plastid. The protein localises to the chloroplast thylakoid membrane. It catalyses the reaction ATP + H2O + 4 H(+)(in) = ADP + phosphate + 5 H(+)(out). Functionally, produces ATP from ADP in the presence of a proton gradient across the membrane. The alpha chain is a regulatory subunit. The polypeptide is ATP synthase subunit alpha, chloroplastic (Stigeoclonium helveticum (Green alga)).